The primary structure comprises 200 residues: 3-isopropylmalate dehydratase small subunit (200 aa).

The protein belongs to the LeuD family. LeuD type 1 subfamily. In terms of assembly, heterodimer of LeuC and LeuD.

It catalyses the reaction (2R,3S)-3-isopropylmalate = (2S)-2-isopropylmalate. It functions in the pathway amino-acid biosynthesis; L-leucine biosynthesis; L-leucine from 3-methyl-2-oxobutanoate: step 2/4. Catalyzes the isomerization between 2-isopropylmalate and 3-isopropylmalate, via the formation of 2-isopropylmaleate. In Vibrio vulnificus (strain YJ016), this protein is 3-isopropylmalate dehydratase small subunit.